The following is a 426-amino-acid chain: Mothers against decapentaplegic homolog 7 (426 aa).

The disordered stretch occupies residues 14–40 (WRSRAPGGEDEEEGVGGGGGGGGLRGE). Residues 28-39 (VGGGGGGGGLRG) are compositionally biased toward gly residues. Lysine 64 and lysine 70 each carry N6-acetyllysine; alternate. Residues lysine 64 and lysine 70 each participate in a glycyl lysine isopeptide (Lys-Gly) (interchain with G-Cter in ubiquitin); alternate cross-link. The MH1 domain maps to 64 to 207 (KAVRGAKGHH…LSRLCELESP (144 aa)). A compositionally biased stretch (basic residues) spans 67-76 (RGAKGHHHPH). Residues 67–88 (RGAKGHHHPHPPSSGAGAAGGA) form a disordered region. Zn(2+)-binding residues include cysteine 125, cysteine 180, cysteine 192, and histidine 197. The PY-motif motif lies at 208-211 (PPPY). Positions 208-217 (PPPYSRYPMD) are important for interaction with SMURF2. Serine 249 is modified (phosphoserine). An MH2 domain is found at 261–426 (WCVVAYWEEK…CWLEVIFNSR (166 aa)).

This sequence belongs to the dwarfin/SMAD family. Interacts with COPS5. Interacts with STAMBP. Interacts with NEDD4L. Interacts with RNF111, AXIN1 and AXIN2. Interacts with PPP1R15A. Interacts with ACVR1B, SMURF1, SMURF2 and TGFBR1; SMAD7 recruits SMURF1 and SMURF2 to the TGF-beta receptor and regulates its degradation. Interacts with WWP1. Interacts with PDPK1 (via PH domain). Interacts with TSC22D1/TSC-22; the interaction requires TGF-beta and the interaction is inhibited by TGFBR1. Post-translationally, phosphorylation on Ser-249 does not affect its stability, nuclear localization or inhibitory function in TGFB signaling; however it affects its ability to regulate transcription. Phosphorylated by PDPK1. Ubiquitinated by WWP1. Polyubiquitinated by RNF111, which is enhanced by AXIN1 and promotes proteasomal degradation. In response to TGF-beta, ubiquitinated by SMURF1; which promotes its degradation. In terms of processing, acetylation prevents ubiquitination and degradation mediated by SMURF1. In terms of tissue distribution, ubiquitous.

The protein resides in the nucleus. Its subcellular location is the cytoplasm. Antagonist of signaling by TGF-beta (transforming growth factor) type 1 receptor superfamily members; has been shown to inhibit TGF-beta (Transforming growth factor) and activin signaling by associating with their receptors thus preventing SMAD2 access. Functions as an adapter to recruit SMURF2 to the TGF-beta receptor complex. Also acts by recruiting the PPP1R15A-PP1 complex to TGFBR1, which promotes its dephosphorylation. Positively regulates PDPK1 kinase activity by stimulating its dissociation from the 14-3-3 protein YWHAQ which acts as a negative regulator. In Rattus norvegicus (Rat), this protein is Mothers against decapentaplegic homolog 7 (Smad7).